A 445-amino-acid polypeptide reads, in one-letter code: Fibrinogen gamma chain (445 aa).

The first 25 residues, 1 to 25 (MNWSLQLRSFILCWALLLLSPTGLA), serve as a signal peptide directing secretion. An N-linked (GlcNAc...) asparagine glycan is attached at Asn78. A Fibrinogen C-terminal domain is found at 170–416 (RIHDTTGKDC…ETTMKIIPFN (247 aa)). Cys179 and Cys208 are disulfide-bonded. Ca(2+) contacts are provided by Asp344, Asp346, and Gly350. Cys352 and Cys365 are disulfide-bonded. A gamma-chain polymerization, binding amino end of another fibrin alpha chain region spans residues 400 to 422 (TRWYSMKETTMKIIPFNRLSIGD). Gln424 participates in a covalent cross-link: Isoglutamyl lysine isopeptide (Gln-Lys) (interchain with K-432). Residues 424–445 (QQHHMGGSKQVSVEHEVDVEYP) are disordered. Ser431 is modified (phosphoserine). An Isoglutamyl lysine isopeptide (Lys-Gln) (interchain with Q-424) cross-link involves residue Lys432. Basic and acidic residues predominate over residues 435–445 (SVEHEVDVEYP).

As to quaternary structure, heterohexamer; disulfide linked. Contains 2 sets of 3 non-identical chains (alpha, beta and gamma). The 2 heterotrimers are in head to head conformation with the N-termini in a small central domain. Post-translationally, conversion of fibrinogen to fibrin is triggered by thrombin, which cleaves fibrinopeptides A and B from alpha and beta chains, and thus exposes the N-terminal polymerization sites responsible for the formation of the soft clot. The soft clot is converted into the hard clot by factor XIIIA which catalyzes the epsilon-(gamma-glutamyl)lysine cross-linking between gamma chains (stronger) and between alpha chains (weaker) of different monomers.

The protein localises to the secreted. Its function is as follows. Together with fibrinogen alpha (FGA) and fibrinogen beta (FGB), polymerizes to form an insoluble fibrin matrix. Has a major function in hemostasis as one of the primary components of blood clots. In addition, functions during the early stages of wound repair to stabilize the lesion and guide cell migration during re-epithelialization. Was originally thought to be essential for platelet aggregation, based on in vitro studies using anticoagulated blood. However, subsequent studies have shown that it is not absolutely required for thrombus formation in vivo. Enhances expression of SELP in activated platelets via an ITGB3-dependent pathway. Maternal fibrinogen is essential for successful pregnancy. Fibrin deposition is also associated with infection, where it protects against IFNG-mediated hemorrhage. May also facilitate the antibacterial immune response via both innate and T-cell mediated pathways. This is Fibrinogen gamma chain (Fgg) from Rattus norvegicus (Rat).